The primary structure comprises 380 residues: Succinyl-diaminopimelate desuccinylase (380 aa).

A Zn(2+)-binding site is contributed by H69. D71 is an active-site residue. D102 is a binding site for Zn(2+). Residue E135 is the Proton acceptor of the active site. Residues E136, E164, and H353 each coordinate Zn(2+).

The protein belongs to the peptidase M20A family. DapE subfamily. Homodimer. The cofactor is Zn(2+). Co(2+) serves as cofactor.

The catalysed reaction is N-succinyl-(2S,6S)-2,6-diaminopimelate + H2O = (2S,6S)-2,6-diaminopimelate + succinate. It participates in amino-acid biosynthesis; L-lysine biosynthesis via DAP pathway; LL-2,6-diaminopimelate from (S)-tetrahydrodipicolinate (succinylase route): step 3/3. Catalyzes the hydrolysis of N-succinyl-L,L-diaminopimelic acid (SDAP), forming succinate and LL-2,6-diaminopimelate (DAP), an intermediate involved in the bacterial biosynthesis of lysine and meso-diaminopimelic acid, an essential component of bacterial cell walls. The polypeptide is Succinyl-diaminopimelate desuccinylase (Cereibacter sphaeroides (strain KD131 / KCTC 12085) (Rhodobacter sphaeroides)).